The sequence spans 293 residues: Shikimate dehydrogenase (NADP(+)) (293 aa).

Shikimate-binding positions include 26-28 (SKS) and threonine 73. Residue lysine 77 is the Proton acceptor of the active site. Aspartate 89 is an NADP(+) binding site. Shikimate is bound by residues asparagine 98 and aspartate 113. NADP(+) is bound by residues 137 to 141 (GAGGA), 161 to 166 (NRTKQR), and isoleucine 231. Position 233 (tyrosine 233) interacts with shikimate. Residue glycine 254 participates in NADP(+) binding.

This sequence belongs to the shikimate dehydrogenase family. In terms of assembly, homodimer.

The enzyme catalyses shikimate + NADP(+) = 3-dehydroshikimate + NADPH + H(+). Its pathway is metabolic intermediate biosynthesis; chorismate biosynthesis; chorismate from D-erythrose 4-phosphate and phosphoenolpyruvate: step 4/7. Involved in the biosynthesis of the chorismate, which leads to the biosynthesis of aromatic amino acids. Catalyzes the reversible NADPH linked reduction of 3-dehydroshikimate (DHSA) to yield shikimate (SA). The chain is Shikimate dehydrogenase (NADP(+)) from Bartonella henselae (strain ATCC 49882 / DSM 28221 / CCUG 30454 / Houston 1) (Rochalimaea henselae).